The following is a 287-amino-acid chain: Homoserine kinase (287 aa).

79 to 89 (PLARGLGSSSS) is an ATP binding site.

It belongs to the GHMP kinase family. Homoserine kinase subfamily.

Its subcellular location is the cytoplasm. It catalyses the reaction L-homoserine + ATP = O-phospho-L-homoserine + ADP + H(+). It participates in amino-acid biosynthesis; L-threonine biosynthesis; L-threonine from L-aspartate: step 4/5. Its function is as follows. Catalyzes the ATP-dependent phosphorylation of L-homoserine to L-homoserine phosphate. This Enterococcus faecalis (strain ATCC 700802 / V583) protein is Homoserine kinase.